A 180-amino-acid polypeptide reads, in one-letter code: MENRLKAKYENEIRPALIEKFNYSSVMQAPKIDKIVLNMGVGDATTNSKNLDEAVEELGLISGQKPLITKAKKSIAGFRLREGMSIGAKVTLRGERMYDFLDKLVNVALPRVRDFHGVSNKAFDGRGNYTLGIHEQLIFPEIDYDKVNRVRGLDVVIVTTAQTDEESRELLAQLGMPFAK.

This sequence belongs to the universal ribosomal protein uL5 family. In terms of assembly, part of the 50S ribosomal subunit; part of the 5S rRNA/L5/L18/L25 subcomplex. Contacts the 5S rRNA and the P site tRNA. Forms a bridge to the 30S subunit in the 70S ribosome.

Its function is as follows. This is one of the proteins that bind and probably mediate the attachment of the 5S RNA into the large ribosomal subunit, where it forms part of the central protuberance. In the 70S ribosome it contacts protein S13 of the 30S subunit (bridge B1b), connecting the 2 subunits; this bridge is implicated in subunit movement. Contacts the P site tRNA; the 5S rRNA and some of its associated proteins might help stabilize positioning of ribosome-bound tRNAs. This is Large ribosomal subunit protein uL5 from Limosilactobacillus reuteri (strain DSM 20016) (Lactobacillus reuteri).